We begin with the raw amino-acid sequence, 725 residues long: Ribosomal RNA large subunit methyltransferase K/L (725 aa).

A THUMP domain is found at 45 to 156 (SGYRACLWSR…RGRLSLGIDL (112 aa)).

The protein belongs to the methyltransferase superfamily. RlmKL family.

Its subcellular location is the cytoplasm. The catalysed reaction is guanosine(2445) in 23S rRNA + S-adenosyl-L-methionine = N(2)-methylguanosine(2445) in 23S rRNA + S-adenosyl-L-homocysteine + H(+). It carries out the reaction guanosine(2069) in 23S rRNA + S-adenosyl-L-methionine = N(2)-methylguanosine(2069) in 23S rRNA + S-adenosyl-L-homocysteine + H(+). Functionally, specifically methylates the guanine in position 2445 (m2G2445) and the guanine in position 2069 (m7G2069) of 23S rRNA. In Marinobacter nauticus (strain ATCC 700491 / DSM 11845 / VT8) (Marinobacter aquaeolei), this protein is Ribosomal RNA large subunit methyltransferase K/L.